Reading from the N-terminus, the 1012-residue chain is Formate dehydrogenase 2 subunit alpha (cytochrome c-553) (1012 aa).

Residues 1-33 (MKTTRRSFLKLVGVSVVGLSLGQLGFDLEDAQA) constitute a signal peptide (tat-type signal). Residues 43 to 99 (AKEVGTVCPFCSVCCQVIAYVRNGKLVSTEGDPDFPVNEGALCAKGAALFSMYTNPH) form the 4Fe-4S Mo/W bis-MGD-type domain. [4Fe-4S] cluster-binding residues include C50, C53, C57, and C85. U189 contacts W-bis(molybdopterin guanine dinucleotide). A non-standard amino acid (selenocysteine) is located at residue U189. Ca(2+) contacts are provided by T389, R391, K394, L424, and N426.

This sequence belongs to the prokaryotic molybdopterin-containing oxidoreductase family. Heterotrimer of cytochrome c3 FDH2C and formate dehydrogenase FDH2 alpha and beta subunits that forms the FdhABC(3) complex. The cofactor is [4Fe-4S] cluster. Requires W-bis(molybdopterin guanine dinucleotide) as cofactor. Predicted to be exported by the Tat system. The position of the signal peptide cleavage has not been experimentally proven.

The protein resides in the periplasm. The catalysed reaction is 2 Fe(III)-[cytochrome c553] + formate = 2 Fe(II)-[cytochrome c553] + CO2 + H(+). Functionally, alpha chain of the formate dehydrogenase (FDH) that catalyzes the reversible two-electron oxidation of formate to carbon dioxide. The alpha subunit of formate dehydrogenase forms the active site. The sequence is that of Formate dehydrogenase 2 subunit alpha (cytochrome c-553) from Nitratidesulfovibrio vulgaris (strain ATCC 29579 / DSM 644 / CCUG 34227 / NCIMB 8303 / VKM B-1760 / Hildenborough) (Desulfovibrio vulgaris).